The sequence spans 152 residues: Endoribonuclease YbeY (152 aa).

His113, His117, and His123 together coordinate Zn(2+).

This sequence belongs to the endoribonuclease YbeY family. Zn(2+) serves as cofactor.

It localises to the cytoplasm. Its function is as follows. Single strand-specific metallo-endoribonuclease involved in late-stage 70S ribosome quality control and in maturation of the 3' terminus of the 16S rRNA. The protein is Endoribonuclease YbeY of Delftia acidovorans (strain DSM 14801 / SPH-1).